Consider the following 170-residue polypeptide: UPF0316 protein CLK_3798 (170 aa).

2 consecutive transmembrane segments (helical) span residues 1 to 21 (MLSYYAFIFFAKIMEVALMTI) and 36 to 56 (IIGFIEVTIWLYVTSSVLSGI).

This sequence belongs to the UPF0316 family.

Its subcellular location is the cell membrane. The protein is UPF0316 protein CLK_3798 of Clostridium botulinum (strain Loch Maree / Type A3).